Here is a 473-residue protein sequence, read N- to C-terminus: Photosystem II CP43 reaction center protein (473 aa).

The propeptide occupies M1–E14. The residue at position 15 (T15) is an N-acetylthreonine. Phosphothreonine is present on T15. Transmembrane regions (helical) follow at residues L69–A93, L134–N155, K178–T200, K255–S275, and W291–A312. Residue E367 participates in [CaMn4O5] cluster binding. Residues R447–P471 form a helical membrane-spanning segment.

This sequence belongs to the PsbB/PsbC family. PsbC subfamily. In terms of assembly, PSII is composed of 1 copy each of membrane proteins PsbA, PsbB, PsbC, PsbD, PsbE, PsbF, PsbH, PsbI, PsbJ, PsbK, PsbL, PsbM, PsbT, PsbX, PsbY, PsbZ, Psb30/Ycf12, at least 3 peripheral proteins of the oxygen-evolving complex and a large number of cofactors. It forms dimeric complexes. Binds multiple chlorophylls and provides some of the ligands for the Ca-4Mn-5O cluster of the oxygen-evolving complex. It may also provide a ligand for a Cl- that is required for oxygen evolution. PSII binds additional chlorophylls, carotenoids and specific lipids. serves as cofactor.

The protein resides in the plastid. Its subcellular location is the chloroplast thylakoid membrane. In terms of biological role, one of the components of the core complex of photosystem II (PSII). It binds chlorophyll and helps catalyze the primary light-induced photochemical processes of PSII. PSII is a light-driven water:plastoquinone oxidoreductase, using light energy to abstract electrons from H(2)O, generating O(2) and a proton gradient subsequently used for ATP formation. The sequence is that of Photosystem II CP43 reaction center protein from Abies alba (Edeltanne).